The primary structure comprises 948 residues: Probable disease resistance protein At5g47260 (948 aa).

Residues arginine 20 to isoleucine 57 adopt a coiled-coil conformation. Positions histidine 134 to arginine 432 constitute an NB-ARC domain. Glycine 176–threonine 183 contributes to the ATP binding site. 9 LRR repeats span residues methionine 498–serine 519, glutamate 520–tryptophan 542, glycine 545–leucine 567, leucine 569–lysine 591, serine 592–leucine 614, asparagine 615–glutamine 636, serine 640–glutamine 661, serine 666–asparagine 686, and serine 690–threonine 711.

The protein belongs to the disease resistance NB-LRR family.

Functionally, potential disease resistance protein. This is Probable disease resistance protein At5g47260 from Arabidopsis thaliana (Mouse-ear cress).